We begin with the raw amino-acid sequence, 79 residues long: Phosphoribosylformylglycinamidine synthase subunit PurS (79 aa).

This sequence belongs to the PurS family. As to quaternary structure, homodimer. Part of the FGAM synthase complex composed of 1 PurL, 1 PurQ and 2 PurS subunits.

The protein resides in the cytoplasm. The catalysed reaction is N(2)-formyl-N(1)-(5-phospho-beta-D-ribosyl)glycinamide + L-glutamine + ATP + H2O = 2-formamido-N(1)-(5-O-phospho-beta-D-ribosyl)acetamidine + L-glutamate + ADP + phosphate + H(+). Its pathway is purine metabolism; IMP biosynthesis via de novo pathway; 5-amino-1-(5-phospho-D-ribosyl)imidazole from N(2)-formyl-N(1)-(5-phospho-D-ribosyl)glycinamide: step 1/2. Part of the phosphoribosylformylglycinamidine synthase complex involved in the purines biosynthetic pathway. Catalyzes the ATP-dependent conversion of formylglycinamide ribonucleotide (FGAR) and glutamine to yield formylglycinamidine ribonucleotide (FGAM) and glutamate. The FGAM synthase complex is composed of three subunits. PurQ produces an ammonia molecule by converting glutamine to glutamate. PurL transfers the ammonia molecule to FGAR to form FGAM in an ATP-dependent manner. PurS interacts with PurQ and PurL and is thought to assist in the transfer of the ammonia molecule from PurQ to PurL. This chain is Phosphoribosylformylglycinamidine synthase subunit PurS, found in Mycobacterium leprae (strain TN).